The following is a 1401-amino-acid chain: DNA-directed RNA polymerase subunit beta'' (1401 aa).

Residues Cys-224, Cys-294, Cys-301, and Cys-304 each contribute to the Zn(2+) site.

It belongs to the RNA polymerase beta' chain family. RpoC2 subfamily. In terms of assembly, in plastids the minimal PEP RNA polymerase catalytic core is composed of four subunits: alpha, beta, beta', and beta''. When a (nuclear-encoded) sigma factor is associated with the core the holoenzyme is formed, which can initiate transcription. The cofactor is Zn(2+).

The protein localises to the plastid. Its subcellular location is the chloroplast. The catalysed reaction is RNA(n) + a ribonucleoside 5'-triphosphate = RNA(n+1) + diphosphate. DNA-dependent RNA polymerase catalyzes the transcription of DNA into RNA using the four ribonucleoside triphosphates as substrates. The protein is DNA-directed RNA polymerase subunit beta'' of Nymphaea alba (White water-lily).